We begin with the raw amino-acid sequence, 159 residues long: Ribosomal RNA large subunit methyltransferase H (159 aa).

S-adenosyl-L-methionine contacts are provided by residues L76, G108, and 127–132 (FGRMTL).

Belongs to the RNA methyltransferase RlmH family. In terms of assembly, homodimer.

The protein localises to the cytoplasm. It carries out the reaction pseudouridine(1915) in 23S rRNA + S-adenosyl-L-methionine = N(3)-methylpseudouridine(1915) in 23S rRNA + S-adenosyl-L-homocysteine + H(+). Specifically methylates the pseudouridine at position 1915 (m3Psi1915) in 23S rRNA. In Lactococcus lactis subsp. cremoris (strain SK11), this protein is Ribosomal RNA large subunit methyltransferase H.